The following is a 136-amino-acid chain: Large ribosomal subunit protein uL16 (136 aa).

The protein belongs to the universal ribosomal protein uL16 family. Part of the 50S ribosomal subunit.

In terms of biological role, binds 23S rRNA and is also seen to make contacts with the A and possibly P site tRNAs. In Shigella flexneri, this protein is Large ribosomal subunit protein uL16.